The chain runs to 306 residues: MIFQRTVKEMVKTIGVGLHSGNKVTLSIKPAPVNSGIVLVRTDLEPAVSIPAKAELVRETTMCTALVNDDGIRISTIEHLFAALAGLGIDNAIIEVDAPEIPIMDGSASPFVFLLQSVGIQEQAAPKKYLRIKKNIRVEDGDKWVELKPYKGFKIDFTIDFEHPVIARSEQHMKMEFSSSAFIRDISRARTFGFMRDIEYLRANNLALGGSMENAVVLDEYKVLNPDGLRYEDEFVKHKILDAFGDLYVAGYAIVGEFCAYKTGHALNNRLVRALLAQQDAWELVSFETEREAPVSFSVPSGAVFA.

The Zn(2+) site is built by His79, His238, and Asp242. The active-site Proton donor is His265.

Belongs to the LpxC family. Zn(2+) serves as cofactor.

It catalyses the reaction a UDP-3-O-[(3R)-3-hydroxyacyl]-N-acetyl-alpha-D-glucosamine + H2O = a UDP-3-O-[(3R)-3-hydroxyacyl]-alpha-D-glucosamine + acetate. It functions in the pathway glycolipid biosynthesis; lipid IV(A) biosynthesis; lipid IV(A) from (3R)-3-hydroxytetradecanoyl-[acyl-carrier-protein] and UDP-N-acetyl-alpha-D-glucosamine: step 2/6. Functionally, catalyzes the hydrolysis of UDP-3-O-myristoyl-N-acetylglucosamine to form UDP-3-O-myristoylglucosamine and acetate, the committed step in lipid A biosynthesis. This Shewanella violacea (strain JCM 10179 / CIP 106290 / LMG 19151 / DSS12) protein is UDP-3-O-acyl-N-acetylglucosamine deacetylase.